The following is a 265-amino-acid chain: Putative 2-aminoethylphosphonate transport system permease protein PhnV (265 aa).

A run of 6 helical transmembrane segments spans residues 13 to 33 (GVVA…VILM), 69 to 89 (LTIG…AALA), 104 to 124 (VFYL…LVAF), 131 to 151 (MNGT…AFTF), 185 to 205 (LPLL…LSMG), and 233 to 253 (NIAD…LLMM). In terms of domain architecture, ABC transmembrane type-1 spans 65–253 (LLASLTIGFC…LVAITLLLMM (189 aa)).

This sequence belongs to the binding-protein-dependent transport system permease family.

It is found in the cell inner membrane. In terms of biological role, probably part of the PhnSTUV complex (TC 3.A.1.11.5) involved in 2-aminoethylphosphonate import. Probably responsible for the translocation of the substrate across the membrane. This is Putative 2-aminoethylphosphonate transport system permease protein PhnV (phnV) from Salmonella paratyphi A (strain ATCC 9150 / SARB42).